We begin with the raw amino-acid sequence, 207 residues long: Uridine kinase (207 aa).

Position 13-20 (13-20) interacts with ATP; sequence GASGSGKT.

It belongs to the uridine kinase family.

It localises to the cytoplasm. It carries out the reaction uridine + ATP = UMP + ADP + H(+). The catalysed reaction is cytidine + ATP = CMP + ADP + H(+). The protein operates within pyrimidine metabolism; CTP biosynthesis via salvage pathway; CTP from cytidine: step 1/3. It functions in the pathway pyrimidine metabolism; UMP biosynthesis via salvage pathway; UMP from uridine: step 1/1. This Ureaplasma parvum serovar 3 (strain ATCC 27815 / 27 / NCTC 11736) protein is Uridine kinase.